Reading from the N-terminus, the 292-residue chain is MSYIPFPDISPELFSIELFGVTFALRWYALAYIAGLLIGWRLVLRMIRAERLWSFGPPMTEDQLERLLTWVILGVILGGRLGFVLFYQPAHYLAHPLDILKVWEGGMSFHGGFLGVMTALVAFCLKERISILPVADLLAAATPPGLFLGRIANFINAELWGRPTTLPWGVAFPGEAAQSCPGIEGICARHPSQIYEAGLEGILLFTVLSLLVWRRGWLHWPGSVSGMFLAGYGATRFLVEFVRQPDAQFVSAGNPLGLAWQISGYGLTMGQILSLPMILLGLYLILRSRRTA.

3 consecutive transmembrane segments (helical) span residues Leu-18–Ile-38, Leu-67–Tyr-87, and Gly-105–Leu-125. Arg-150 serves as a coordination point for a 1,2-diacyl-sn-glycero-3-phospho-(1'-sn-glycerol). 3 helical membrane passes run Gln-193–Trp-213, Gly-222–Val-242, and Gly-266–Leu-286.

It belongs to the Lgt family.

The protein resides in the cell inner membrane. It carries out the reaction L-cysteinyl-[prolipoprotein] + a 1,2-diacyl-sn-glycero-3-phospho-(1'-sn-glycerol) = an S-1,2-diacyl-sn-glyceryl-L-cysteinyl-[prolipoprotein] + sn-glycerol 1-phosphate + H(+). It functions in the pathway protein modification; lipoprotein biosynthesis (diacylglyceryl transfer). Its function is as follows. Catalyzes the transfer of the diacylglyceryl group from phosphatidylglycerol to the sulfhydryl group of the N-terminal cysteine of a prolipoprotein, the first step in the formation of mature lipoproteins. This Cereibacter sphaeroides (strain ATCC 17023 / DSM 158 / JCM 6121 / CCUG 31486 / LMG 2827 / NBRC 12203 / NCIMB 8253 / ATH 2.4.1.) (Rhodobacter sphaeroides) protein is Phosphatidylglycerol--prolipoprotein diacylglyceryl transferase.